The chain runs to 439 residues: Serine hydroxymethyltransferase (439 aa).

Residues Leu-119 and 123 to 125 (GHL) contribute to the (6S)-5,6,7,8-tetrahydrofolate site. Residue Lys-228 is modified to N6-(pyridoxal phosphate)lysine. Position 370-372 (370-372 (SPF)) interacts with (6S)-5,6,7,8-tetrahydrofolate.

Belongs to the SHMT family. In terms of assembly, homodimer. Requires pyridoxal 5'-phosphate as cofactor.

The protein localises to the cytoplasm. The enzyme catalyses (6R)-5,10-methylene-5,6,7,8-tetrahydrofolate + glycine + H2O = (6S)-5,6,7,8-tetrahydrofolate + L-serine. The protein operates within one-carbon metabolism; tetrahydrofolate interconversion. It functions in the pathway amino-acid biosynthesis; glycine biosynthesis; glycine from L-serine: step 1/1. Its function is as follows. Catalyzes the reversible interconversion of serine and glycine with tetrahydrofolate (THF) serving as the one-carbon carrier. This reaction serves as the major source of one-carbon groups required for the biosynthesis of purines, thymidylate, methionine, and other important biomolecules. Also exhibits THF-independent aldolase activity toward beta-hydroxyamino acids, producing glycine and aldehydes, via a retro-aldol mechanism. This chain is Serine hydroxymethyltransferase, found in Chlorobium phaeobacteroides (strain BS1).